Reading from the N-terminus, the 41-residue chain is Large ribosomal subunit protein bL36B (41 aa).

Belongs to the bacterial ribosomal protein bL36 family.

The protein is Large ribosomal subunit protein bL36B of Neisseria meningitidis serogroup C (strain 053442).